The following is a 207-amino-acid chain: ATP synthase subunit b 2 (207 aa).

The chain crosses the membrane as a helical span at residues 53–72 (TYASQLLWLVITFGVFYLLM).

It belongs to the ATPase B chain family. As to quaternary structure, F-type ATPases have 2 components, F(1) - the catalytic core - and F(0) - the membrane proton channel. F(1) has five subunits: alpha(3), beta(3), gamma(1), delta(1), epsilon(1). F(0) has three main subunits: a(1), b(2) and c(10-14). The alpha and beta chains form an alternating ring which encloses part of the gamma chain. F(1) is attached to F(0) by a central stalk formed by the gamma and epsilon chains, while a peripheral stalk is formed by the delta and b chains.

The protein localises to the cell inner membrane. In terms of biological role, f(1)F(0) ATP synthase produces ATP from ADP in the presence of a proton or sodium gradient. F-type ATPases consist of two structural domains, F(1) containing the extramembraneous catalytic core and F(0) containing the membrane proton channel, linked together by a central stalk and a peripheral stalk. During catalysis, ATP synthesis in the catalytic domain of F(1) is coupled via a rotary mechanism of the central stalk subunits to proton translocation. Component of the F(0) channel, it forms part of the peripheral stalk, linking F(1) to F(0). The b'-subunit is a diverged and duplicated form of b found in plants and photosynthetic bacteria. This Rhizobium etli (strain ATCC 51251 / DSM 11541 / JCM 21823 / NBRC 15573 / CFN 42) protein is ATP synthase subunit b 2 (atpF2).